Here is a 130-residue protein sequence, read N- to C-terminus: Small ribosomal subunit protein uS8 (130 aa).

This sequence belongs to the universal ribosomal protein uS8 family. Part of the 30S ribosomal subunit. Contacts proteins S5 and S12.

Its function is as follows. One of the primary rRNA binding proteins, it binds directly to 16S rRNA central domain where it helps coordinate assembly of the platform of the 30S subunit. The chain is Small ribosomal subunit protein uS8 from Aliivibrio salmonicida (strain LFI1238) (Vibrio salmonicida (strain LFI1238)).